Reading from the N-terminus, the 301-residue chain is GTP cyclohydrolase FolE2 (301 aa).

This sequence belongs to the GTP cyclohydrolase IV family.

It catalyses the reaction GTP + H2O = 7,8-dihydroneopterin 3'-triphosphate + formate + H(+). It functions in the pathway cofactor biosynthesis; 7,8-dihydroneopterin triphosphate biosynthesis; 7,8-dihydroneopterin triphosphate from GTP: step 1/1. Its function is as follows. Converts GTP to 7,8-dihydroneopterin triphosphate. The chain is GTP cyclohydrolase FolE2 from Pseudomonas putida (strain GB-1).